A 172-amino-acid polypeptide reads, in one-letter code: T-cell receptor gamma chain C region C7.5 (172 aa).

Positions Asp1–Thr140 are c region. A helical transmembrane segment spans residues Tyr141 to Leu160. The Cytoplasmic portion of the chain corresponds to Arg161–Ser172.

Its subcellular location is the membrane. The sequence is that of T-cell receptor gamma chain C region C7.5 from Mus musculus (Mouse).